Here is a 349-residue protein sequence, read N- to C-terminus: Glycerol-3-phosphate dehydrogenase [NAD(P)+] (349 aa).

The NADPH site is built by tryptophan 16, arginine 36, and lysine 110. Lysine 110, glycine 138, and threonine 140 together coordinate sn-glycerol 3-phosphate. NADPH is bound at residue alanine 142. Residues lysine 193, aspartate 246, serine 256, arginine 257, and asparagine 258 each coordinate sn-glycerol 3-phosphate. The active-site Proton acceptor is the lysine 193. Arginine 257 serves as a coordination point for NADPH. 2 residues coordinate NADPH: valine 281 and glutamate 283.

It belongs to the NAD-dependent glycerol-3-phosphate dehydrogenase family.

It localises to the cytoplasm. It carries out the reaction sn-glycerol 3-phosphate + NAD(+) = dihydroxyacetone phosphate + NADH + H(+). The catalysed reaction is sn-glycerol 3-phosphate + NADP(+) = dihydroxyacetone phosphate + NADPH + H(+). It functions in the pathway membrane lipid metabolism; glycerophospholipid metabolism. Catalyzes the reduction of the glycolytic intermediate dihydroxyacetone phosphate (DHAP) to sn-glycerol 3-phosphate (G3P), the key precursor for phospholipid synthesis. The protein is Glycerol-3-phosphate dehydrogenase [NAD(P)+] of Rhodospirillum rubrum (strain ATCC 11170 / ATH 1.1.1 / DSM 467 / LMG 4362 / NCIMB 8255 / S1).